Consider the following 468-residue polypeptide: Pituitary adenylate cyclase-activating polypeptide type I receptor (468 aa).

Positions M1 to A20 are cleaved as a signal peptide. Residues M21–S152 lie on the Extracellular side of the membrane. 3 disulfides stabilise this stretch: C34–C63, C54–C118, and C77–C134. Residues N48, N60, and N117 are each glycosylated (N-linked (GlcNAc...) asparagine). Positions E125 to Y139 are important for ADCYAP1/PACAP ligand binding and specificity. Residues V153 to R177 form a helical membrane-spanning segment. Residues F178 to F187 are Cytoplasmic-facing. A helical transmembrane segment spans residues I188 to W208. Residues I209–T223 are Extracellular-facing. Residues V224–L249 form a helical membrane-spanning segment. An intrachain disulfide couples C226 to C296. The Cytoplasmic segment spans residues Y250 to Y267. The chain crosses the membrane as a helical span at residues W268 to Y290. Over F291–S302 the chain is Extracellular. N300 carries an N-linked (GlcNAc...) asparagine glycan. A helical membrane pass occupies residues T303–V329. Over I330–I347 the chain is Cytoplasmic. The chain crosses the membrane as a helical span at residues Y348–E374. N-linked (GlcNAc...) asparagine glycosylation is present at N375. Over N375–R379 the chain is Extracellular. A helical membrane pass occupies residues E380–L403. Over N404 to T468 the chain is Cytoplasmic. Residues S434 and S447 each carry the phosphoserine modification.

This sequence belongs to the G-protein coupled receptor 2 family. As to quaternary structure, interacts with maxadilan, a vasodilator peptide from Lutzomyia longipalpis saliva; the interaction results in ADCYAP1R1 activation. Most abundant in the brain, low expression in the lung, liver, thymus, spleen, pancreas and placenta.

The protein localises to the cell membrane. Several synthetic peptides derived from maxadilan, a vasodilator peptide from Lutzomyia longipalpis saliva, act as antagonists for ADCYAP1R1. Functionally, g protein-coupled receptor activated by the neuropeptide pituitary adenylate cyclase-activating polypeptide (ADCYAP1/PACAP). Binds both PACAP27 and PACAP38 bioactive peptides. Ligand binding causes a conformation change that triggers signaling via guanine nucleotide-binding proteins (G proteins) and modulates the activity of downstream effectors. Activates cAMP-dependent pathway. May regulate the release of adrenocorticotropin, luteinizing hormone, growth hormone, prolactin, epinephrine, and catecholamine. May play a role in spermatogenesis and sperm motility. Causes smooth muscle relaxation and secretion in the gastrointestinal tract. This chain is Pituitary adenylate cyclase-activating polypeptide type I receptor, found in Homo sapiens (Human).